Here is a 332-residue protein sequence, read N- to C-terminus: Adenosine deaminase (332 aa).

Positions 12 and 14 each coordinate Zn(2+). Substrate-binding residues include His-14, Asp-16, and Gly-169. His-196 contributes to the Zn(2+) binding site. Glu-199 functions as the Proton donor in the catalytic mechanism. Zn(2+) is bound at residue Asp-277.

Belongs to the metallo-dependent hydrolases superfamily. Adenosine and AMP deaminases family. Adenosine deaminase subfamily. Requires Zn(2+) as cofactor.

The enzyme catalyses adenosine + H2O + H(+) = inosine + NH4(+). It carries out the reaction 2'-deoxyadenosine + H2O + H(+) = 2'-deoxyinosine + NH4(+). Its function is as follows. Catalyzes the hydrolytic deamination of adenosine and 2-deoxyadenosine. This is Adenosine deaminase from Vibrio atlanticus (strain LGP32) (Vibrio splendidus (strain Mel32)).